The chain runs to 525 residues: Light-independent protochlorophyllide reductase subunit B (525 aa).

D36 is a [4Fe-4S] cluster binding site. The active-site Proton donor is the D286. A substrate-binding site is contributed by 421 to 422 (GL).

Belongs to the ChlB/BchB/BchZ family. As to quaternary structure, protochlorophyllide reductase is composed of three subunits; ChlL, ChlN and ChlB. Forms a heterotetramer of two ChlB and two ChlN subunits. [4Fe-4S] cluster is required as a cofactor.

It catalyses the reaction chlorophyllide a + oxidized 2[4Fe-4S]-[ferredoxin] + 2 ADP + 2 phosphate = protochlorophyllide a + reduced 2[4Fe-4S]-[ferredoxin] + 2 ATP + 2 H2O. It functions in the pathway porphyrin-containing compound metabolism; chlorophyll biosynthesis (light-independent). In terms of biological role, component of the dark-operative protochlorophyllide reductase (DPOR) that uses Mg-ATP and reduced ferredoxin to reduce ring D of protochlorophyllide (Pchlide) to form chlorophyllide a (Chlide). This reaction is light-independent. The NB-protein (ChlN-ChlB) is the catalytic component of the complex. In Prochlorococcus marinus (strain NATL1A), this protein is Light-independent protochlorophyllide reductase subunit B.